Consider the following 239-residue polypeptide: Fatty acid metabolism regulator protein (239 aa).

Residues 6-74 enclose the HTH gntR-type domain; sequence QSPAGFAEEY…HGKPTKINNF (69 aa). A DNA-binding region (H-T-H motif) is located at residues 34–53; sequence ERELSELIGVTRTTLREVLQ.

As to quaternary structure, homodimer.

It localises to the cytoplasm. Multifunctional regulator of fatty acid metabolism. The polypeptide is Fatty acid metabolism regulator protein (Pectobacterium atrosepticum (strain SCRI 1043 / ATCC BAA-672) (Erwinia carotovora subsp. atroseptica)).